A 140-amino-acid polypeptide reads, in one-letter code: Probable lipoprotein LppE (140 aa).

The N-terminal stretch at 1–21 (MCNRLVTVTGVAMVVAAGLSA) is a signal peptide. A lipid anchor (N-palmitoyl cysteine) is attached at Cys22. The S-diacylglycerol cysteine moiety is linked to residue Cys22.

Belongs to the mycobacterial 19 kDa antigen family.

The protein localises to the cell membrane. The protein is Probable lipoprotein LppE (lppE) of Mycobacterium tuberculosis (strain ATCC 25618 / H37Rv).